A 637-amino-acid chain; its full sequence is Probable potassium transport system protein Kup 2 (637 aa).

Positions Met1–Ala21 are disordered. 12 helical membrane-spanning segments follow: residues Leu29 to Phe49, Val68 to Val88, Leu116 to Pro136, Val150 to Phe170, Val180 to Leu200, Ala228 to Val248, Ile258 to Gly278, Ala300 to Ile320, Leu359 to Ala379, Ala381 to Met401, Leu409 to Ala429, and Ile434 to Thr454.

This sequence belongs to the HAK/KUP transporter (TC 2.A.72) family.

The protein resides in the cell inner membrane. It catalyses the reaction K(+)(in) + H(+)(in) = K(+)(out) + H(+)(out). In terms of biological role, transport of potassium into the cell. Likely operates as a K(+):H(+) symporter. In Mesorhizobium japonicum (strain LMG 29417 / CECT 9101 / MAFF 303099) (Mesorhizobium loti (strain MAFF 303099)), this protein is Probable potassium transport system protein Kup 2.